The primary structure comprises 532 residues: UDP-glucuronosyltransferase 1A6 (532 aa).

Positions Met1 to Gly26 are cleaved as a signal peptide. N-linked (GlcNAc...) asparagine glycosylation is found at Asn294 and Asn346. Residues Val490–Phe506 form a helical membrane-spanning segment.

This sequence belongs to the UDP-glycosyltransferase family. Isoform 1 interacts with isoform 3/i2 suggesting that oligomerization is involved in negative regulation of transferase activity by isoform 3. Isoform 1 also interacts with respective i2 isoforms of UGT1A1, UGT1A3, UGT1A4, UGT1A7, UGT1A8, UGT1A9 and UGT1A10. Expressed in skin. Isoforms 1 and 3 are expressed in kidney and liver. Isoform 1 but not isoform 2 is expressed in colon, esophagus and small intestine.

The protein localises to the microsome. The protein resides in the endoplasmic reticulum membrane. The catalysed reaction is glucuronate acceptor + UDP-alpha-D-glucuronate = acceptor beta-D-glucuronoside + UDP + H(+). The enzyme catalyses (5Z,8Z,11Z,14Z)-eicosatetraenoate + UDP-alpha-D-glucuronate = O-[(5Z),(8Z),(11Z),(14Z)-eicosatetraenoyl]-beta-D-glucuronate + UDP. It catalyses the reaction 15-hydroxy-(5Z,8Z,11Z,13E)-eicosatetraenoate + UDP-alpha-D-glucuronate = 15-O-(beta-D-glucuronosyl)-(5Z,8Z,11Z,14Z)-eicosatetraenoate + UDP + H(+). It carries out the reaction (E)-ferulate + UDP-alpha-D-glucuronate = (E)-4-O-(beta-D-glucuronosyl)-ferulate + UDP + H(+). The catalysed reaction is (E)-ferulate + UDP-alpha-D-glucuronate = (E)-ferulic acid beta-D-glucuronate ester + UDP. UDP-glucuronosyltransferase (UGT) that catalyzes phase II biotransformation reactions in which lipophilic substrates are conjugated with glucuronic acid to facilitate their inactivation and excretion from the body. Essential for the elimination and detoxification of drugs, xenobiotics and endogenous compounds. Involved in the glucuronidation of arachidonic acid (AA) and AA-derived eicosanoids including 15-HETE and 20-HETE. Conjugates small planar phenolic molecules such as 4-nitrophenol, 1-naphthol, and 4-methylumbelliferone. The bulky phenol 4-hydroxybiphenyl, androgens and estrogens are not substrates. 2-hydroxybiphenyl is an excellent substrate. Involved in the glucuronidation of the phytochemical ferulic acid at the phenolic or the carboxylic acid group. Functionally, isoform 3 lacks transferase activity but acts as a negative regulator of isoform 1. The polypeptide is UDP-glucuronosyltransferase 1A6 (Homo sapiens (Human)).